The following is a 561-amino-acid chain: Potassium-transporting ATPase potassium-binding subunit (561 aa).

12 helical membrane-spanning segments follow: residues Gly-2 to Leu-22, Ile-66 to Phe-86, Ala-135 to Ile-155, Ile-177 to Thr-197, Leu-253 to Phe-273, Ala-280 to Gly-300, Phe-327 to Val-347, Leu-354 to Gly-374, Gly-378 to Gly-398, Ile-413 to Ile-433, Leu-482 to Leu-502, and Ala-531 to Ile-551.

This sequence belongs to the KdpA family. As to quaternary structure, the system is composed of three essential subunits: KdpA, KdpB and KdpC.

The protein resides in the cell inner membrane. Part of the high-affinity ATP-driven potassium transport (or Kdp) system, which catalyzes the hydrolysis of ATP coupled with the electrogenic transport of potassium into the cytoplasm. This subunit binds the periplasmic potassium ions and delivers the ions to the membrane domain of KdpB through an intramembrane tunnel. The protein is Potassium-transporting ATPase potassium-binding subunit of Nostoc sp. (strain PCC 7120 / SAG 25.82 / UTEX 2576).